Reading from the N-terminus, the 117-residue chain is MPKRVVAGIVTSDKMSKTRRVEIARLVKHPKYKKYIRRRTVCHVHDENNESGVGDKVEIIESEPLSKLKRWRLVRVLEKSTAVDVVALRAARKNAEAEGLAAAHAGEPETESAATDA.

Residues 97–117 (AEGLAAAHAGEPETESAATDA) form a disordered region.

Belongs to the universal ribosomal protein uS17 family. In terms of assembly, part of the 30S ribosomal subunit.

One of the primary rRNA binding proteins, it binds specifically to the 5'-end of 16S ribosomal RNA. This is Small ribosomal subunit protein uS17 from Rhodopirellula baltica (strain DSM 10527 / NCIMB 13988 / SH1).